Reading from the N-terminus, the 109-residue chain is Iron-sulfur cluster assembly protein CyaY (109 aa).

It belongs to the frataxin family.

In terms of biological role, involved in iron-sulfur (Fe-S) cluster assembly. May act as a regulator of Fe-S biogenesis. This chain is Iron-sulfur cluster assembly protein CyaY, found in Shewanella baltica (strain OS155 / ATCC BAA-1091).